A 630-amino-acid polypeptide reads, in one-letter code: Probable potassium transport system protein Kup (630 aa).

Transmembrane regions (helical) follow at residues 17–37 (LAIAAIGVVFGDIGTSPLYSL), 51–71 (PSAILGVISLLFWAIILVVGI), 105–125 (ITGLMMALGIFGACMFYGDAV), 144–164 (PQLSHLVLPITIVILIALFWI), 175–195 (LFGPIMVLWFVTIAALGIYHI), 218–238 (VLLAYVVLGSVVLVLTGAEAL), 255–275 (YVLVMPSLVLNYFGQGALLLL), 283–303 (PFFLLAPQWAALPLVVLSTVA), 344–364 (IYVPVVNWLLLFVILCIVIGF), 374–394 (YGIAVTATMVITTILAAVVMV), 402–422 (LLVAMIIGVFLVIDLGFFGAN), and 428–448 (QGGWLPLGIGALLFFLLMTWY).

This sequence belongs to the HAK/KUP transporter (TC 2.A.72) family.

The protein localises to the cell inner membrane. The catalysed reaction is K(+)(in) + H(+)(in) = K(+)(out) + H(+)(out). Transport of potassium into the cell. Likely operates as a K(+):H(+) symporter. The chain is Probable potassium transport system protein Kup from Burkholderia pseudomallei (strain 1710b).